We begin with the raw amino-acid sequence, 184 residues long: ATP-dependent protease subunit HslV (184 aa).

Thr-8 is a catalytic residue. The Na(+) site is built by Gly-165, Asp-168, and Thr-171.

The protein belongs to the peptidase T1B family. HslV subfamily. In terms of assembly, a double ring-shaped homohexamer of HslV is capped on each side by a ring-shaped HslU homohexamer. The assembly of the HslU/HslV complex is dependent on binding of ATP.

The protein resides in the cytoplasm. It carries out the reaction ATP-dependent cleavage of peptide bonds with broad specificity.. With respect to regulation, allosterically activated by HslU binding. Its function is as follows. Protease subunit of a proteasome-like degradation complex believed to be a general protein degrading machinery. This chain is ATP-dependent protease subunit HslV, found in Pediococcus pentosaceus (strain ATCC 25745 / CCUG 21536 / LMG 10740 / 183-1w).